Here is a 141-residue protein sequence, read N- to C-terminus: uncharacterized protein (141 aa).

The tract at residues 1–101 (FRGRAPRPLV…PDPGRSRRAT (101 aa)) is disordered. The span at 27–70 (QVRDCGREGDLRAGKAADRRLPRARETCSRFGEGVRQKDVHKGP) shows a compositional bias: basic and acidic residues.

This is an uncharacterized protein from Dhori virus (strain Indian/1313/61) (Dho).